Consider the following 347-residue polypeptide: Phenylalanine--tRNA ligase alpha subunit (347 aa).

Residue Glu-265 participates in Mg(2+) binding.

Belongs to the class-II aminoacyl-tRNA synthetase family. Phe-tRNA synthetase alpha subunit type 1 subfamily. Tetramer of two alpha and two beta subunits. Mg(2+) is required as a cofactor.

The protein localises to the cytoplasm. It carries out the reaction tRNA(Phe) + L-phenylalanine + ATP = L-phenylalanyl-tRNA(Phe) + AMP + diphosphate + H(+). This Wolbachia sp. subsp. Drosophila simulans (strain wRi) protein is Phenylalanine--tRNA ligase alpha subunit.